Consider the following 588-residue polypeptide: Probable metalloprotease ARX1 (588 aa).

It belongs to the peptidase M24 family. As to quaternary structure, component of the nucleoplasmic and cytoplasmic pre-60S ribosomal particles.

The protein resides in the cytoplasm. It localises to the nucleus. Functionally, probable metalloprotease involved in proper assembly of pre-ribosomal particles during the biogenesis of the 60S ribosomal subunit. Accompanies the pre-60S particles to the cytoplasm. The polypeptide is Probable metalloprotease ARX1 (ARX1) (Candida glabrata (strain ATCC 2001 / BCRC 20586 / JCM 3761 / NBRC 0622 / NRRL Y-65 / CBS 138) (Yeast)).